A 237-amino-acid chain; its full sequence is Large ribosomal subunit protein uL1 (237 aa).

This sequence belongs to the universal ribosomal protein uL1 family. Part of the 50S ribosomal subunit.

Binds directly to 23S rRNA. The L1 stalk is quite mobile in the ribosome, and is involved in E site tRNA release. In terms of biological role, protein L1 is also a translational repressor protein, it controls the translation of the L11 operon by binding to its mRNA. The sequence is that of Large ribosomal subunit protein uL1 from Nocardia farcinica (strain IFM 10152).